Reading from the N-terminus, the 413-residue chain is Gamma-glutamyl phosphate reductase (413 aa).

It belongs to the gamma-glutamyl phosphate reductase family.

The protein resides in the cytoplasm. The catalysed reaction is L-glutamate 5-semialdehyde + phosphate + NADP(+) = L-glutamyl 5-phosphate + NADPH + H(+). It functions in the pathway amino-acid biosynthesis; L-proline biosynthesis; L-glutamate 5-semialdehyde from L-glutamate: step 2/2. Its function is as follows. Catalyzes the NADPH-dependent reduction of L-glutamate 5-phosphate into L-glutamate 5-semialdehyde and phosphate. The product spontaneously undergoes cyclization to form 1-pyrroline-5-carboxylate. The sequence is that of Gamma-glutamyl phosphate reductase from Anoxybacillus flavithermus (strain DSM 21510 / WK1).